Consider the following 919-residue polypeptide: Puromycin-sensitive aminopeptidase (919 aa).

Residues E180 and 316–320 contribute to the substrate site; that span reads GAMEN. H352 provides a ligand contact to Zn(2+). E353 (proton acceptor) is an active-site residue. Zn(2+) contacts are provided by H356 and E375. The residue at position 464 (Y464) is a 3'-nitrotyrosine. A Nuclear localization signal motif is present at residues 726–730; that stretch reads RRRFK.

It belongs to the peptidase M1 family. In terms of assembly, monomer. The cofactor is Zn(2+). In terms of tissue distribution, detected in liver, epithelium of renal tubules, epithelium of small and large intestine, gastric epithelial cells, and alveoli of the lung (at protein level).

The protein localises to the cytoplasm. It localises to the cytosol. The protein resides in the nucleus. It carries out the reaction Release of an N-terminal amino acid, preferentially alanine, from a wide range of peptides, amides and arylamides.. With respect to regulation, strongly inhibited by bestatin, leuhistin, actinonin, amastatin, 1,10-phenanthroline, DFP, PCMBS, Zn(2+), Cd(2+), Co(2+), Cu(2+), Hg(2+), EDTA and puromycin. Not inhibited by PMSF, and only slightly inhibited by leupeptin and aprotinin. Activity is increased by Mg(2+) and Ca(2+). In terms of biological role, aminopeptidase with broad substrate specificity for several peptides. Involved in proteolytic events essential for cell growth and viability. May act as regulator of neuropeptide activity. Plays a role in the antigen-processing pathway for MHC class I molecules. Involved in the N-terminal trimming of cytotoxic T-cell epitope precursors. Digests the poly-Q peptides found in many cellular proteins. Digests tau from normal brain more efficiently than tau from Alzheimer disease brain. The chain is Puromycin-sensitive aminopeptidase (NPEPPS) from Homo sapiens (Human).